Reading from the N-terminus, the 224-residue chain is Putative endoglucanase X (224 aa).

The disordered stretch occupies residues 147-168 (QTQPTPSPSPTPTDSPLVKKGD). Positions 162 to 224 (PLVKKGDVNL…SILKRILLRN (63 aa)) constitute a Dockerin domain.

The catalysed reaction is Endohydrolysis of (1-&gt;4)-beta-D-glucosidic linkages in cellulose, lichenin and cereal beta-D-glucans.. Functionally, this enzyme catalyzes the endohydrolysis of 1,4-beta-glucosidic linkages in cellulose, lichenin and cereal beta-D-glucans. This is Putative endoglucanase X (celX) from Acetivibrio thermocellus (Hungateiclostridium thermocellum).